Consider the following 230-residue polypeptide: NAD(P)H-quinone oxidoreductase subunit K, chloroplastic (230 aa).

Cys-43, Cys-44, Cys-108, and Cys-139 together coordinate [4Fe-4S] cluster.

It belongs to the complex I 20 kDa subunit family. As to quaternary structure, NDH is composed of at least 16 different subunits, 5 of which are encoded in the nucleus. The cofactor is [4Fe-4S] cluster.

It localises to the plastid. It is found in the chloroplast thylakoid membrane. It carries out the reaction a plastoquinone + NADH + (n+1) H(+)(in) = a plastoquinol + NAD(+) + n H(+)(out). The enzyme catalyses a plastoquinone + NADPH + (n+1) H(+)(in) = a plastoquinol + NADP(+) + n H(+)(out). Functionally, NDH shuttles electrons from NAD(P)H:plastoquinone, via FMN and iron-sulfur (Fe-S) centers, to quinones in the photosynthetic chain and possibly in a chloroplast respiratory chain. The immediate electron acceptor for the enzyme in this species is believed to be plastoquinone. Couples the redox reaction to proton translocation, and thus conserves the redox energy in a proton gradient. This is NAD(P)H-quinone oxidoreductase subunit K, chloroplastic from Lotus japonicus (Lotus corniculatus var. japonicus).